Here is a 455-residue protein sequence, read N- to C-terminus: Nucleolar protein 12 (455 aa).

2 disordered regions span residues 1-104 and 117-142; these read MSSF…ENEN and QNEEQDESKESSEAKSSKVAEERTKA. Residues 24 to 37 are compositionally biased toward basic and acidic residues; that stretch reads NTRDGPVSKDELVK. Positions 51–66 are enriched in polar residues; that stretch reads PKQQTNENESTLNQSA. A compositionally biased stretch (acidic residues) spans 68-91; sequence ESDEEEEEYNDESNEGDDSDDAEQ. A compositionally biased stretch (basic and acidic residues) spans 124–141; the sequence is SKESSEAKSSKVAEERTK. RRM domains lie at 160 to 258 and 266 to 351; these read RTVF…HVSH and RTIF…RAKS. Disordered regions lie at residues 333 to 402 and 420 to 455; these read LETG…RSTV and AIKGIKGSKKGKKVKKPRIRERSTKFKEERKTMNKV. Positions 339–348 are enriched in basic residues; sequence KKGRKLRISR. Over residues 349–363 the composition is skewed to polar residues; it reads AKSNAKPSLMSPNHF. Residues 425-438 are compositionally biased toward basic residues; it reads KGSKKGKKVKKPRI. A compositionally biased stretch (basic and acidic residues) spans 439 to 455; sequence RERSTKFKEERKTMNKV.

It belongs to the RRM RBM34 family.

The protein localises to the nucleus. Its subcellular location is the nucleolus. In terms of biological role, involved in pre-25S rRNA processing. This is Nucleolar protein 12 (NOP12) from Candida albicans (strain SC5314 / ATCC MYA-2876) (Yeast).